Consider the following 973-residue polypeptide: Sensor histidine kinase TmoS (973 aa).

One can recognise a PAS 1 domain in the interval 32–103 (REELARIIFD…NQKRLVEAAS (72 aa)). A PAC 1 domain is found at 108–162 (VRCDIEILGKSGGREVIAVDFSLLPIRDEQENIVFLLAEGRNITDKKKAEAMLAL). In terms of domain architecture, Histidine kinase 1 spans 187 to 405 (KVSHELRTPL…LFQVKLPLNA (219 aa)). A Phosphohistidine; by autocatalysis modification is found at His190. The region spanning 452–567 (RVLIVEDNPD…ELRARVSNLI (116 aa)) is the Response regulatory domain. Residue Asp500 is modified to 4-aspartylphosphate. Positions 611–681 (SEARWKAVYE…QRLARLLQSG (71 aa)) constitute a PAS 2 domain. Positions 685-737 (YSVECSYLCKNGSTIWANASVSLMSPRVDEPQVILQIIDDITEKKQAQETLNQ) constitute a PAC 2 domain. In terms of domain architecture, Histidine kinase 2 spans 757 to 973 (YIAHEINQPL…ACFFVSIPVS (217 aa)). A Phosphohistidine modification is found at His760.

Autophosphorylated. Activation requires a sequential transfer of a phosphate group from a His in the primary transmitter domain, to an Asp in the receiver domain and to a His in the secondary transmitter domain.

It localises to the cytoplasm. It catalyses the reaction ATP + protein L-histidine = ADP + protein N-phospho-L-histidine.. Activity is regulated by agonists and antagonists. Binding of agonists such as toluene or benzene to TmoS stimulates autophosphorylation. Toluene causes the most pronounced increase, followed by benzene, chlorobenzene and ethylbenzene. Activity is inhibited by antagonists such as o-xylene, o-chlorotoluene and trimethylbenzene isomers, which bind to TmoS but do not stimulate autophosphorylation. In terms of biological role, member of the two-component regulatory system TmoS/TmoT involved in the regulation of toluene degradation. Probably phosphorylates TmoT via a four-step phosphorelay in response to toluene. Can also be induced by benzene and ethylbenzene. The sequence is that of Sensor histidine kinase TmoS (tmoS) from Ectopseudomonas mendocina (Pseudomonas mendocina).